Reading from the N-terminus, the 742-residue chain is Zinc finger protein 700 (742 aa).

Residues 1–20 (MPCCSHRSCREDPGTSESRE) form a disordered region. The segment covering 8–20 (SCREDPGTSESRE) has biased composition (basic and acidic residues). Residues 24-104 (VAFEDVAVNF…KEDSHCGETF (81 aa)) enclose the KRAB domain. C2H2-type zinc fingers lie at residues 194–216 (YACK…MVMH), 222–244 (YKCK…ERTH), 250–272 (YECK…ERTH), 278–300 (YECS…ERSH), 306–328 (YQCK…ERTH), 362–384 (YKCK…EKTH), 390–412 (YKCK…ERIH), 418–440 (YECK…GGTH), and 446–468 (YECK…GRTH). The C2H2-type 10; degenerate zinc finger occupies 474–502 (YECKECGKAFRYVKHLQIHERTEKHIRMP). 8 C2H2-type zinc fingers span residues 508–530 (YKCS…EKTH), 536–558 (YECN…ERTH), 564–586 (YECK…ERTH), 592–614 (YECK…GRTH), 620–642 (YECK…ERTH), 648–670 (YECK…ERKH), 676–698 (YECK…ARTH), and 704–726 (YECK…ARTH).

This sequence belongs to the krueppel C2H2-type zinc-finger protein family.

It localises to the nucleus. Its function is as follows. May be involved in transcriptional regulation. The chain is Zinc finger protein 700 (ZNF700) from Homo sapiens (Human).